The primary structure comprises 349 residues: MSKIRVLSVDDSALMRQIMTEIINSHSDMEMVATAPDPLVARDLIKKFNPDVLTLDVEMPRMDGLDFLEKLMRLRPMPVVMVSSLTGKGSEVTLRALELGAIDFVTKPQLGIREGMLAYSEMIAEKVRTAAKASLAAHKPLSAPTTLKAGPLLSSEKLIAIGASTGGTEAIRHVLQPLPLSSPALLITQHMPPGFTRSFADRLNKLCQIGVKEAEDGERVLPGHAYIAPGDRHMELARSGANYQIKIHDGPAVNRHRPSVDVLFHSVAKQAGRNAVGVILTGMGNDGAAGMLAMRQAGAWTLAQNEASCVVFGMPREAINMGGVCEVVDLSQVSQQMLAKISAGQAIRI.

One can recognise a Response regulatory domain in the interval R5–M122. Position 56 is a 4-aspartylphosphate (D56). Residues L152–G344 form the CheB-type methylesterase domain. Catalysis depends on residues S164, H190, and D286.

Belongs to the CheB family. In terms of processing, phosphorylated by CheA. Phosphorylation of the N-terminal regulatory domain activates the methylesterase activity.

Its subcellular location is the cytoplasm. It carries out the reaction [protein]-L-glutamate 5-O-methyl ester + H2O = L-glutamyl-[protein] + methanol + H(+). The enzyme catalyses L-glutaminyl-[protein] + H2O = L-glutamyl-[protein] + NH4(+). Involved in chemotaxis. Part of a chemotaxis signal transduction system that modulates chemotaxis in response to various stimuli. Catalyzes the demethylation of specific methylglutamate residues introduced into the chemoreceptors (methyl-accepting chemotaxis proteins or MCP) by CheR. Also mediates the irreversible deamidation of specific glutamine residues to glutamic acid. The protein is Protein-glutamate methylesterase/protein-glutamine glutaminase of Escherichia coli O6:H1 (strain CFT073 / ATCC 700928 / UPEC).